The chain runs to 83 residues: RNA-binding protein Hfq (83 aa).

A Sm domain is found at 9–69; that stretch reads DYFLNQLRKD…ISTFAPARNV (61 aa).

Belongs to the Hfq family. In terms of assembly, homohexamer.

In terms of biological role, RNA chaperone that binds small regulatory RNA (sRNAs) and mRNAs to facilitate mRNA translational regulation in response to envelope stress, environmental stress and changes in metabolite concentrations. Also binds with high specificity to tRNAs. The sequence is that of RNA-binding protein Hfq from Exiguobacterium sibiricum (strain DSM 17290 / CCUG 55495 / CIP 109462 / JCM 13490 / 255-15).